The primary structure comprises 329 residues: Sex comb on midleg-like protein 1 (329 aa).

Phosphoserine occurs at positions 138 and 238. A disordered region spans residues 138 to 157 (SPTLPVSRRENNSPSNLPRP). In terms of domain architecture, SAM spans 258–325 (WSVEAVVLFL…YYIDRLKQGK (68 aa)).

The protein belongs to the SCM family.

The protein resides in the nucleus. Putative Polycomb group (PcG) protein. PcG proteins act by forming multiprotein complexes, which are required to maintain the transcriptionally repressive state of homeotic genes throughout development. May be involved in spermatogenesis during sexual maturation. In Pan troglodytes (Chimpanzee), this protein is Sex comb on midleg-like protein 1 (SCML1).